The chain runs to 266 residues: Interleukin-1 beta (266 aa).

Positions 1-114 (MAAVPELSSE…DTWDEEYESD (114 aa)) are excised as a propeptide.

This sequence belongs to the IL-1 family. Monomer. In its precursor form, weakly interacts with full-length MEFV; the mature cytokine does not interact at all. Interacts with integrins ITGAV:ITGBV and ITGA5:ITGB1; integrin-binding is required for IL1B signaling. Interacts with cargo receptor TMED10; the interaction is direct and is required for the secretion of IL1B mature form. Interacts with HSP90AB1; the interaction facilitates cargo translocation into the ERGIC. Interacts with HSP90B1; the interaction facilitates cargo translocation into the ERGIC.

It localises to the cytoplasm. It is found in the cytosol. The protein resides in the secreted. The protein localises to the lysosome. Its subcellular location is the extracellular exosome. Potent pro-inflammatory cytokine. Initially discovered as the major endogenous pyrogen, induces prostaglandin synthesis, neutrophil influx and activation, T-cell activation and cytokine production, B-cell activation and antibody production, and fibroblast proliferation and collagen production. Promotes Th17 differentiation of T-cells. Synergizes with IL12/interleukin-12 to induce IFNG synthesis from T-helper 1 (Th1) cells. Plays a role in angiogenesis by inducing VEGF production synergistically with TNF and IL6. Involved in transduction of inflammation downstream of pyroptosis: its mature form is specifically released in the extracellular milieu by passing through the gasdermin-D (GSDMD) pore. This chain is Interleukin-1 beta (IL1B), found in Cavia porcellus (Guinea pig).